The primary structure comprises 186 residues: Acireductone dioxygenase (186 aa).

Fe(2+) is bound by residues histidine 89, histidine 91, glutamate 95, and histidine 134. 4 residues coordinate Ni(2+): histidine 89, histidine 91, glutamate 95, and histidine 134.

It belongs to the acireductone dioxygenase (ARD) family. Requires Fe(2+) as cofactor. The cofactor is Ni(2+).

It localises to the cytoplasm. It is found in the nucleus. The catalysed reaction is 1,2-dihydroxy-5-(methylsulfanyl)pent-1-en-3-one + O2 = 4-methylsulfanyl-2-oxobutanoate + formate + 2 H(+). The enzyme catalyses 1,2-dihydroxy-5-(methylsulfanyl)pent-1-en-3-one + O2 = 3-(methylsulfanyl)propanoate + CO + formate + 2 H(+). The protein operates within amino-acid biosynthesis; L-methionine biosynthesis via salvage pathway; L-methionine from S-methyl-5-thio-alpha-D-ribose 1-phosphate: step 5/6. Catalyzes 2 different reactions between oxygen and the acireductone 1,2-dihydroxy-3-keto-5-methylthiopentene (DHK-MTPene) depending upon the metal bound in the active site. Fe-containing acireductone dioxygenase (Fe-ARD) produces formate and 2-keto-4-methylthiobutyrate (KMTB), the alpha-ketoacid precursor of methionine in the methionine recycle pathway. Ni-containing acireductone dioxygenase (Ni-ARD) produces methylthiopropionate, carbon monoxide and formate, and does not lie on the methionine recycle pathway. This Drosophila melanogaster (Fruit fly) protein is Acireductone dioxygenase.